The primary structure comprises 1223 residues: MMSLSVRPQRRLLSARVSRSQSFAGVLGSHERGPRSFTVFSPPGPPRKPLVLSRVSRMFSVAHPAPKVPQPERLDLVYTALKRGLTAYLEVHQQEQEKLQRQIKESKRNSRLGFLYDLDKQVKSIERFLRRLEFHASKIDELYEAYCVQRRLRDGAYNMVRAYSTGSPGSREARDSLAEATRGHREYTESMCLLENELEAQLGEFHLRMKGLAGFARLCVGDQYEICMKYGRQRWKLRGRIESSGKQVWDSEETVFLPLLTEFLSIKVTELKGLANHVVVGSVSCETKDLFAALPQVVAVDINDLGTIKLSLEVIWSPFDKDDQPSAASTVNKASTVTKRFSTYSQSPPDTPSLREQAFYNMLRRQEELENGTAWSLSSESSDDSSSPQLSGTARHSTPKPLVQQPEPLPVQVAFRRPESLTSGSMDEEPAMTPSLVNGHAPYSRTLSHISEASVDAALTEAVEAVDSQSPIPGPSPLVYPDSTHVERVSSVLPVLNNGHSATSPALSTTGPAPTFIDPAPTTQLDLVHKTTDSAPSELPSITHTTTSSAYSAVSLVNSVPSLTSTTIGSAHTTTPSPLTSTGSVPNATDSTQATPSPTHSTPSPTHTTIRLTHTTVSPTHSSPSPIHTTPSPTHTTVSPTCTTPSSGHSTTSPTQEAKMSTHTTGAVGPVQTTTSPISTTESPSPSTDVAIISSSSAESTGPGTEPLPCSHPASPPYTKADPTASCTSYQSLASSGSKPLTSPAPDSPEQIPKSPSSSPSSSAPEPQHSEHNLAAVAQAPVPEATGGAGDRRLEEALGTLMSALDDYRGQFPELQGLEQEVTRLESLLMQRQGLTRSRASSLSITVEHALESFSFLNDDEDEDNDGPGDRHTSSPEVVAEDRLDSSNGQSLSTGCSALDATLVQHLYHCSRLLLKLGTFGPLRCQEAWALERLLREARVFQEVCERSKLWGNSATSAQEVVQFSASRPGFLTFWDQCTEGLSPFICSVERVLLTFCSQYGARLSLRQPGLAEAVCVKFLEDALGQKLPRRPQPGPGEQFTIFQFWSYVEALDSPSMDAYVTETAEEVLLVQNLNSDDQAVVLKALRLAPEGRLRKDGLRALSSLLVHGNNKVMAAVSTQLRSLSLGPVFRERALLCFLDQLEDGDVQTRVAGCLALGCIKAPEGIEPLVYLCQTDTEAVREAARQSLQQCGEEGQSAHRQLEESLDALPCIFGPSSMASTAF.

Residue Ser-22 is modified to Phosphoserine. Residues 83 to 112 (RGLTAYLEVHQQEQEKLQRQIKESKRNSRL) are a coiled coil. Residues Ser-345 and Ser-347 each carry the phosphoserine modification. Thr-351 is modified (phosphothreonine). A disordered region spans residues 371 to 411 (NGTAWSLSSESSDDSSSPQLSGTARHSTPKPLVQQPEPLPV). Low complexity-rich tracts occupy residues 376–391 (SLSSESSDDSSSPQLS) and 399–411 (PKPLVQQPEPLPV). A phosphoserine mark is found at Ser-451, Ser-454, and Ser-468. 2 stretches are compositionally biased toward low complexity: residues 566–586 (TTIGSAHTTTPSPLTSTGSVP) and 595–655 (TPSP…TSPT). 2 disordered regions span residues 566–771 (TTIG…QHSE) and 856–887 (FLNDDEDEDNDGPGDRHTSSPEVVAEDRLDSS). Residues 656–665 (QEAKMSTHTT) are compositionally biased toward polar residues. The span at 673–688 (TTTSPISTTESPSPST) shows a compositional bias: low complexity. Composition is skewed to polar residues over residues 693–703 (ISSSSAESTGP) and 725–741 (ASCTSYQSLASSGSKPL). Phosphoserine is present on Ser-748. A compositionally biased stretch (low complexity) spans 748–767 (SPEQIPKSPSSSPSSSAPEP). Positions 858-867 (NDDEDEDNDG) are enriched in acidic residues. Residues 868-885 (PGDRHTSSPEVVAEDRLD) are compositionally biased toward basic and acidic residues. Residues Ser-874 and Ser-875 each carry the phosphoserine modification.

The protein belongs to the RIPOR family. In terms of assembly, interacts (via N-terminus) with RHOA (GTP-bound form); this interaction links active RHOA to STK24 and STK26 kinases. Interacts with RHOB. Interacts with RHOC. Interacts (via C-terminus) with PDCD10; this interaction occurs in a Rho-independent manner. Interacts (via C-terminus) with STK24; this interaction occurs in a PDCD10-dependent and Rho-independent manner. Interacts (via C-terminus) with STK26; this interaction occurs in a PDCD10-dependent and Rho-independent manner. Interacts (via N-terminus) with 14-3-3 proteins; these interactions occur in a Rho-dependent manner. As to expression, expressed in the kidney exclusively by glomerular podocytes.

It is found in the cytoplasm. It localises to the golgi apparatus. In terms of biological role, downstream effector protein for Rho-type small GTPases that plays a role in cell polarity and directional migration. Acts as an adapter protein, linking active Rho proteins to STK24 and STK26 kinases, and hence positively regulates Golgi reorientation in polarized cell migration upon Rho activation. Involved in the subcellular relocation of STK26 from the Golgi to cytoplasm punctae in a Rho- and PDCD10-dependent manner upon serum stimulation. This is Rho family-interacting cell polarization regulator 1 from Mus musculus (Mouse).